The chain runs to 213 residues: Protein Flattop (213 aa).

Residues 127–213 (VDQPAEQSKI…HNSRPASQEK (87 aa)) are disordered. Residues 151 to 213 (QHIQDQSRPA…HNSRPASQEK (63 aa)) are compositionally biased toward polar residues.

It belongs to the Flattop family.

It localises to the cytoplasm. The protein localises to the cytoskeleton. Its subcellular location is the cilium basal body. The protein resides in the cell projection. It is found in the cilium. It localises to the apical cell membrane. The protein localises to the cilium axoneme. Microtubule inner protein (MIP) part of the dynein-decorated doublet microtubules (DMTs) in cilia axoneme. Acts as a regulator of cilium basal body docking and positioning in mono- and multiciliated cells. Regulates basal body docking and cilia formation in multiciliated lung cells. Regulates kinocilium positioning and stereocilia bundle morphogenesis in the inner ear. This is Protein Flattop from Danio rerio (Zebrafish).